Consider the following 487-residue polypeptide: Aromatic-L-amino-acid decarboxylase (487 aa).

N-acetylmethionine is present on Met-1. 2 tandem repeats follow at residues 58–115 (EDIE…TELE) and 118–178 (MMDW…MQAA). The tract at residues 58-178 (EDIEKIIMPG…AASPELMQAA (121 aa)) is 2 X approximate tandem repeats. Thr-82 contributes to the substrate binding site. Ala-148 and Ser-149 together coordinate pyridoxal 5'-phosphate. Residue His-192 participates in substrate binding. Residues Thr-246 and Asn-300 each contribute to the pyridoxal 5'-phosphate site. Position 303 is an N6-(pyridoxal phosphate)lysine (Lys-303).

The protein belongs to the group II decarboxylase family. As to quaternary structure, homodimer. The cofactor is pyridoxal 5'-phosphate.

It catalyses the reaction L-dopa + H(+) = dopamine + CO2. The catalysed reaction is 5-hydroxy-L-tryptophan + H(+) = serotonin + CO2. It functions in the pathway catecholamine biosynthesis; dopamine biosynthesis; dopamine from L-tyrosine: step 2/2. In terms of biological role, catalyzes the decarboxylation of L-3,4-dihydroxyphenylalanine (DOPA) to dopamine and L-5-hydroxytryptophan to serotonin. The polypeptide is Aromatic-L-amino-acid decarboxylase (DDC) (Bos taurus (Bovine)).